The sequence spans 328 residues: Glycerol-3-phosphate dehydrogenase [NAD(P)+] (328 aa).

The NADPH site is built by Trp-15, Arg-35, Arg-36, and Lys-105. 2 residues coordinate sn-glycerol 3-phosphate: Lys-105 and Gly-131. Ala-135 lines the NADPH pocket. Lys-186, Asp-239, Ser-249, Arg-250, and Asn-251 together coordinate sn-glycerol 3-phosphate. Lys-186 functions as the Proton acceptor in the catalytic mechanism. Position 250 (Arg-250) interacts with NADPH. Val-270 and Glu-272 together coordinate NADPH.

It belongs to the NAD-dependent glycerol-3-phosphate dehydrogenase family.

The protein resides in the cytoplasm. It catalyses the reaction sn-glycerol 3-phosphate + NAD(+) = dihydroxyacetone phosphate + NADH + H(+). The enzyme catalyses sn-glycerol 3-phosphate + NADP(+) = dihydroxyacetone phosphate + NADPH + H(+). Its pathway is membrane lipid metabolism; glycerophospholipid metabolism. Catalyzes the reduction of the glycolytic intermediate dihydroxyacetone phosphate (DHAP) to sn-glycerol 3-phosphate (G3P), the key precursor for phospholipid synthesis. This chain is Glycerol-3-phosphate dehydrogenase [NAD(P)+], found in Deinococcus radiodurans (strain ATCC 13939 / DSM 20539 / JCM 16871 / CCUG 27074 / LMG 4051 / NBRC 15346 / NCIMB 9279 / VKM B-1422 / R1).